The chain runs to 217 residues: 3,4-dihydroxy-2-butanone 4-phosphate synthase (217 aa).

Residues 37 to 38 (RE), Asp42, 150 to 154 (RGGHT), and Glu174 contribute to the D-ribulose 5-phosphate site. Glu38 contacts Mg(2+). His153 contacts Mg(2+).

This sequence belongs to the DHBP synthase family. Homodimer. Mg(2+) is required as a cofactor. The cofactor is Mn(2+).

It carries out the reaction D-ribulose 5-phosphate = (2S)-2-hydroxy-3-oxobutyl phosphate + formate + H(+). Its pathway is cofactor biosynthesis; riboflavin biosynthesis; 2-hydroxy-3-oxobutyl phosphate from D-ribulose 5-phosphate: step 1/1. Catalyzes the conversion of D-ribulose 5-phosphate to formate and 3,4-dihydroxy-2-butanone 4-phosphate. The sequence is that of 3,4-dihydroxy-2-butanone 4-phosphate synthase from Escherichia fergusonii (strain ATCC 35469 / DSM 13698 / CCUG 18766 / IAM 14443 / JCM 21226 / LMG 7866 / NBRC 102419 / NCTC 12128 / CDC 0568-73).